Reading from the N-terminus, the 1400-residue chain is DNA-directed RNA polymerase subunit beta' (1400 aa).

Zn(2+) contacts are provided by C71, C73, C86, and C89. Mg(2+) contacts are provided by D462, D464, and D466. Residues C810, C884, C891, and C894 each coordinate Zn(2+).

Belongs to the RNA polymerase beta' chain family. As to quaternary structure, the RNAP catalytic core consists of 2 alpha, 1 beta, 1 beta' and 1 omega subunit. When a sigma factor is associated with the core the holoenzyme is formed, which can initiate transcription. The cofactor is Mg(2+). Zn(2+) is required as a cofactor.

The catalysed reaction is RNA(n) + a ribonucleoside 5'-triphosphate = RNA(n+1) + diphosphate. Functionally, DNA-dependent RNA polymerase catalyzes the transcription of DNA into RNA using the four ribonucleoside triphosphates as substrates. The polypeptide is DNA-directed RNA polymerase subunit beta' (Rhodopseudomonas palustris (strain BisA53)).